The primary structure comprises 500 residues: Aspartyl/glutamyl-tRNA(Asn/Gln) amidotransferase subunit B (500 aa).

This sequence belongs to the GatB/GatE family. GatB subfamily. As to quaternary structure, heterotrimer of A, B and C subunits.

The enzyme catalyses L-glutamyl-tRNA(Gln) + L-glutamine + ATP + H2O = L-glutaminyl-tRNA(Gln) + L-glutamate + ADP + phosphate + H(+). It carries out the reaction L-aspartyl-tRNA(Asn) + L-glutamine + ATP + H2O = L-asparaginyl-tRNA(Asn) + L-glutamate + ADP + phosphate + 2 H(+). In terms of biological role, allows the formation of correctly charged Asn-tRNA(Asn) or Gln-tRNA(Gln) through the transamidation of misacylated Asp-tRNA(Asn) or Glu-tRNA(Gln) in organisms which lack either or both of asparaginyl-tRNA or glutaminyl-tRNA synthetases. The reaction takes place in the presence of glutamine and ATP through an activated phospho-Asp-tRNA(Asn) or phospho-Glu-tRNA(Gln). The protein is Aspartyl/glutamyl-tRNA(Asn/Gln) amidotransferase subunit B of Brucella ovis (strain ATCC 25840 / 63/290 / NCTC 10512).